Here is a 327-residue protein sequence, read N- to C-terminus: Methionyl-tRNA formyltransferase (327 aa).

Ser121–Pro124 contributes to the (6S)-5,6,7,8-tetrahydrofolate binding site.

The protein belongs to the Fmt family.

It catalyses the reaction L-methionyl-tRNA(fMet) + (6R)-10-formyltetrahydrofolate = N-formyl-L-methionyl-tRNA(fMet) + (6S)-5,6,7,8-tetrahydrofolate + H(+). Functionally, attaches a formyl group to the free amino group of methionyl-tRNA(fMet). The formyl group appears to play a dual role in the initiator identity of N-formylmethionyl-tRNA by promoting its recognition by IF2 and preventing the misappropriation of this tRNA by the elongation apparatus. The polypeptide is Methionyl-tRNA formyltransferase (Burkholderia pseudomallei (strain 1106a)).